Reading from the N-terminus, the 238-residue chain is uncharacterized protein (238 aa).

Positions 1 to 68 (MIYKSIAERL…HGSGTYLVRK (68 aa)) constitute an HTH gntR-type domain. The H-T-H motif DNA-binding region spans 28-47 (EKKLAEEFAVSRMTIRKAID).

This is an uncharacterized protein from Escherichia coli (strain K12).